Consider the following 515-residue polypeptide: MGSLSSRVLRQPRPALAQQAQGARAGGSARRPDTGDDAAGHGFCYCAGSHKRKRSSGSFCYCHPDSETDEDEEEGDEQQRLLNTPRRKKLKSTSKYIYQTLFLNGENSDIKICALGEEWSLHKIYLCQSGYFSSMFSGSWKESSMNIIELEIPDQNIDVEALQVAFGSLYRDDVLIKPSRVVAILAAACLLQLDGLIQQCGETMKETVNVKTVCGYYTSAGTYGLDSVKKKCLEWLLNNLMTHQNVELFKELSINVMKQLIGSSNLFVMQVEMDIYTALKKWMFLQLVPSWNGSLKQLLTETDVWFSKQRKDFEGMAFLETEQGKPFVSVFRHLRLQYIISDLASARIIEQDAVVPSEWLSSVYKQQWFAMLRAEQDSEVGPQEINKEELEGNSMRCGRKLAKDGEYCWRWTGFNFGFDLLVTYTNRYIIFKRNTLNQPCSGSVSLQPRRSIAFRLRLASFDSSGKLICSRTTGYQILTLEKDQEQVVMNLDSRLLIFPLYICCNFLYISPEKKN.

The disordered stretch occupies residues 1 to 35; that stretch reads MGSLSSRVLRQPRPALAQQAQGARAGGSARRPDTG. Residues 11-29 show a composition bias toward low complexity; sequence QPRPALAQQAQGARAGGSA. The Nuclear localization signal motif lies at 49 to 55; that stretch reads SHKRKRS. The interval 65–85 is disordered; it reads DSETDEDEEEGDEQQRLLNTP. Serine 66 is modified (phosphoserine). The segment covering 67–76 has biased composition (acidic residues); sequence ETDEDEEEGD. At threonine 68 the chain carries Phosphothreonine. A Nuclear localization signal motif is present at residues 85-91; that stretch reads PRRKKLK. Positions 108 to 178 constitute a BTB domain; sequence SDIKICALGE…LYRDDVLIKP (71 aa).

Interacts with TMPO-beta, TSG101 and TFDP2. Interacts with EMD.

The protein localises to the nucleus matrix. In terms of biological role, possible function in spermatogenesis. Enhances the degradation of MDM2 and increases the amount of p53 probably by modulating the nucleocytoplasmic transport. The protein is Germ cell-less protein-like 1 (GMCL1) of Homo sapiens (Human).